Reading from the N-terminus, the 181-residue chain is MILSHRWQCTIVPVDSGRQRRAYPEGVTENLNTIDSIRLLRLDPGLPMPRRAHRGDAGVDLHSTTDVVIAPGHRELVGTGVAIALPLGTVGLIHPRSGLAAREGLSIVNAPGTVDADYRGEIKVCLINLDPSTPITITRGDRIAQLIIQRVELVDFVEVDELDETTRGDQGHGSTGRGSTA.

Substrate is bound by residues 96–98 (RSG), N109, 113–115 (TVD), and K123.

Belongs to the dUTPase family. The cofactor is Mg(2+).

It catalyses the reaction dUTP + H2O = dUMP + diphosphate + H(+). It functions in the pathway pyrimidine metabolism; dUMP biosynthesis; dUMP from dCTP (dUTP route): step 2/2. Its function is as follows. This enzyme is involved in nucleotide metabolism: it produces dUMP, the immediate precursor of thymidine nucleotides and it decreases the intracellular concentration of dUTP so that uracil cannot be incorporated into DNA. The protein is Deoxyuridine 5'-triphosphate nucleotidohydrolase of Corynebacterium efficiens (strain DSM 44549 / YS-314 / AJ 12310 / JCM 11189 / NBRC 100395).